The primary structure comprises 87 residues: Antitoxin YefM (87 aa).

This sequence belongs to the phD/YefM antitoxin family. As to quaternary structure, forms a complex with YoeB which inhibits its toxin activity.

Its function is as follows. Antitoxin component of a type II toxin-antitoxin (TA) system. A probable antitoxin for the putative mRNA interferase YeoB. In Streptomyces coelicolor (strain ATCC BAA-471 / A3(2) / M145), this protein is Antitoxin YefM.